A 181-amino-acid polypeptide reads, in one-letter code: Large ribosomal subunit protein uL5c (181 aa).

This sequence belongs to the universal ribosomal protein uL5 family. Part of the 50S ribosomal subunit; contacts the 5S rRNA.

Its subcellular location is the plastid. It localises to the chloroplast. In terms of biological role, binds 5S rRNA, forms part of the central protuberance of the 50S subunit. The polypeptide is Large ribosomal subunit protein uL5c (rpl5) (Pyropia yezoensis (Susabi-nori)).